The sequence spans 149 residues: Large ribosomal subunit protein bL9 (149 aa).

It belongs to the bacterial ribosomal protein bL9 family.

Functionally, binds to the 23S rRNA. The polypeptide is Large ribosomal subunit protein bL9 (Amoebophilus asiaticus (strain 5a2)).